The chain runs to 562 residues: Thermosome subunit alpha (562 aa).

Disordered stretches follow at residues methionine 1 to glutamate 23 and glycine 526 to glycine 551. A compositionally biased stretch (gly residues) spans glycine 537 to glycine 551.

It belongs to the TCP-1 chaperonin family. As to quaternary structure, forms an oligomeric complex of eight-membered rings.

In terms of biological role, molecular chaperone; binds unfolded polypeptides in vitro, and has a weak ATPase activity. The sequence is that of Thermosome subunit alpha (thsA) from Halobacterium salinarum (strain ATCC 700922 / JCM 11081 / NRC-1) (Halobacterium halobium).